Reading from the N-terminus, the 144-residue chain is Crossover junction endodeoxyribonuclease Hjc (144 aa).

Residue glutamate 12 participates in Mg(2+) binding. The active site involves serine 32. Positions 42 and 55 each coordinate Mg(2+).

It belongs to the Holliday junction resolvase Hjc family. As to quaternary structure, homodimer; forms a 2:1 complex with Hel308 (Hjm). May form a complex with Holliday junction DNA, Hjc and Hjm. The cofactor is Mg(2+).

The enzyme catalyses Endonucleolytic cleavage at a junction such as a reciprocal single-stranded crossover between two homologous DNA duplexes (Holliday junction).. Cleavage stimulated by PCNA123 and PCNA323 and by RadC2. Its function is as follows. A structure-specific endonuclease that resolves Holliday junction (HJ) intermediates during genetic recombination. Cleaves 4-way DNA junctions introducing paired nicks in opposing strands, leaving a 5'-terminal phosphate and a 3'-terminal hydroxyl group that are subsequently ligated to produce recombinant products. Inhibits the helicase activity of Hel308 (Hjm). This chain is Crossover junction endodeoxyribonuclease Hjc, found in Sulfurisphaera tokodaii (strain DSM 16993 / JCM 10545 / NBRC 100140 / 7) (Sulfolobus tokodaii).